We begin with the raw amino-acid sequence, 460 residues long: UDP-N-acetylmuramoylalanine--D-glutamate ligase (460 aa).

120 to 126 (GSNGKTT) is an ATP binding site.

Belongs to the MurCDEF family.

Its subcellular location is the cytoplasm. The enzyme catalyses UDP-N-acetyl-alpha-D-muramoyl-L-alanine + D-glutamate + ATP = UDP-N-acetyl-alpha-D-muramoyl-L-alanyl-D-glutamate + ADP + phosphate + H(+). It participates in cell wall biogenesis; peptidoglycan biosynthesis. Its function is as follows. Cell wall formation. Catalyzes the addition of glutamate to the nucleotide precursor UDP-N-acetylmuramoyl-L-alanine (UMA). In Lactobacillus gasseri (strain ATCC 33323 / DSM 20243 / BCRC 14619 / CIP 102991 / JCM 1131 / KCTC 3163 / NCIMB 11718 / NCTC 13722 / AM63), this protein is UDP-N-acetylmuramoylalanine--D-glutamate ligase.